The sequence spans 336 residues: DNA-directed RNA polymerase subunit alpha (336 aa).

Positions 1-232 (MIQKNWQELI…DQLGLFVNFE (232 aa)) are alpha N-terminal domain (alpha-NTD). Residues 248-336 (FNPALLKKVD…ELAKRYEDQY (89 aa)) are alpha C-terminal domain (alpha-CTD).

It belongs to the RNA polymerase alpha chain family. As to quaternary structure, homodimer. The RNAP catalytic core consists of 2 alpha, 1 beta, 1 beta' and 1 omega subunit. When a sigma factor is associated with the core the holoenzyme is formed, which can initiate transcription.

It carries out the reaction RNA(n) + a ribonucleoside 5'-triphosphate = RNA(n+1) + diphosphate. Functionally, DNA-dependent RNA polymerase catalyzes the transcription of DNA into RNA using the four ribonucleoside triphosphates as substrates. The sequence is that of DNA-directed RNA polymerase subunit alpha from Chelativorans sp. (strain BNC1).